Here is a 172-residue protein sequence, read N- to C-terminus: Large ribosomal subunit protein uL10 (172 aa).

This sequence belongs to the universal ribosomal protein uL10 family. In terms of assembly, part of the ribosomal stalk of the 50S ribosomal subunit. The N-terminus interacts with L11 and the large rRNA to form the base of the stalk. The C-terminus forms an elongated spine to which L12 dimers bind in a sequential fashion forming a multimeric L10(L12)X complex.

Forms part of the ribosomal stalk, playing a central role in the interaction of the ribosome with GTP-bound translation factors. This Lawsonia intracellularis (strain PHE/MN1-00) protein is Large ribosomal subunit protein uL10.